Consider the following 1250-residue polypeptide: Immunoglobulin superfamily DCC subclass member 4 (1250 aa).

An N-terminal signal peptide occupies residues 1–24 (MARGDAGRGRGLLALTFCLLAARG). The Extracellular portion of the chain corresponds to 25–957 (ELLLPQETTV…SDSLDMHSVT (933 aa)). 4 Ig-like C2-type domains span residues 29–137 (PQET…TAVV), 143–229 (ADFS…ALLS), 242–330 (QDVV…AELR), and 335–421 (PAIT…ASLA). Cysteines 57 and 121 form a disulfide. 3 N-linked (GlcNAc...) asparagine glycosylation sites follow: N90, N102, and N157. C164 and C212 form a disulfide bridge. N252 carries N-linked (GlcNAc...) asparagine glycosylation. 2 disulfide bridges follow: C265–C312 and C356–C405. 5 Fibronectin type-III domains span residues 431-525 (APTR…TLDD), 527-623 (PSAA…TPSM), 632-741 (APAE…APAP), 752-845 (PPAH…TLPD), and 850-945 (PPSD…TLQE). The N-linked (GlcNAc...) asparagine glycan is linked to N582. A helical membrane pass occupies residues 958-978 (GIIVGVCLGLLCLLACMCAGL). At 979-1250 (RRSPHRESLP…LPRSPVSSSA (272 aa)) the chain is on the cytoplasmic side. T995 bears the Phosphothreonine mark. 2 disordered regions span residues 1140–1175 (SASN…DPGQ) and 1215–1250 (PGEV…SSSA).

It belongs to the immunoglobulin superfamily. DCC family.

The protein resides in the cell membrane. The polypeptide is Immunoglobulin superfamily DCC subclass member 4 (IGDCC4) (Homo sapiens (Human)).